A 353-amino-acid chain; its full sequence is UPF0283 membrane protein CKO_01392 (353 aa).

3 consecutive transmembrane segments (helical) span residues 70-90 (MVMG…VQWT), 99-119 (WVAL…VGSV), and 213-233 (ESTL…FIAW).

The protein belongs to the UPF0283 family.

The protein localises to the cell inner membrane. This chain is UPF0283 membrane protein CKO_01392, found in Citrobacter koseri (strain ATCC BAA-895 / CDC 4225-83 / SGSC4696).